The primary structure comprises 1244 residues: MSDKKWTAEQLAAITTRDTNLLVAAAAGAGKTAVLVERIIGLITDPHRPVDVDQLLIVTFTNAAAAEMRERIGQALSKALQENPHSKRLARQLTMLNRASITTLHSFCLDLLRRYFYQLDLDPGFRVADEVEAELLRLDVLEELFERRYNQDNVEVFARLVDSYGGQRDDSRLQDLVLELYRFSGSHPLPVQWLTSLAENYVIPEGKTLDDQTWIVQIKKTIFQEVEGVLGLLKQAQWLAKQPGGPEPYSKTLTEDIINIKPLTNNDWDASWEKLYRSITAIKWSKLSPCRGEIDDQLKNKAQNLRNKAKEKFNDIINTYFSAEPTVILEDLRSLQPLIADLAKLTIEFMELYQKKKQAKGLVDFGDLEHYCLTILLDKENDAAEFRPSAVAIELQQQYAEVLVDEYQDINAVQETILRLVSKKNNRFMVGDVKQSIYRFRLAEPKLFLSKSELYANTDNCQGTRIGLSKNFRSRLEVVNAVNFIFRQIMTKKAGEITYDELEELHCGADYPQAEDVKTATGPVEVYLIDRKDAQLEEQNTDSAEEKLTDGEEQEDLDSDQAEARLIGRRIQAMVKGTDKAMGPEFKVWDKEIGKYRPVSYRDIVILLRATTGRANTFLEELRTMGVPTYAEVGTGYFEAVEVETFLSLLKIIDNPRQDVPLAGVLRSPVVGLKASDLAEIRLCSKEGDFYDAVRIAAAADLGDVAVTLTKFLRQLENWRSRARRDTLADLIWLLYRETGYYDYVGGMVGGTQRQANLRVLYHRAKQFEATSFRGLFRFLRFVERLKDSGSDLGAARSLSENEDVVRIMSIHKSKGLEFPVLFVAGLGKRFNMMDLNKDMLMHKELGLGPQIIHLGSRVSYPSLPKLLIKQQIRKESVAEEMRVLYVALTRAREKLILVGAVRDLEKSLEKWCTSTYQAGWTLPDAELMAAKCYLDWLCPAIARHHNGHELRSLAKTEGQPFSEVATDPSAWQLVFQALKDIKNQTQENKEQSQGLLVKIKDMEPFEDAGLIKEVERRLSWQYPRAEVTTRPAKAAVTEVKHKFDELARQEAGVMSYRPKISGRPRFLQQDKGLTPAERGSAIHLVMQHIPLDKLPDEEGVQVLLQNLIQKEILLPQQAAAINPNHITGFFASSIGQRVLQAPKVERELPFSLALPATEVYQELPECGDEMVLVQGVIDCLVDEGDGFLLIDYKSDAVYPGQDSPVDRYRGQINLYARAVQDILGKPVKDRVIYLFNNGQIVHI.

Positions 4-475 constitute a UvrD-like helicase ATP-binding domain; the sequence is KKWTAEQLAA…IGLSKNFRSR (472 aa). 25 to 32 is a binding site for ATP; sequence AAAGAGKT. A UvrD-like helicase C-terminal domain is found at 515–816; sequence EDVKTATGPV…RIMSIHKSKG (302 aa). Residues 538–559 form a disordered region; it reads EQNTDSAEEKLTDGEEQEDLDS.

Belongs to the helicase family. AddA subfamily. In terms of assembly, heterodimer of AddA and AddB/RexB. It depends on Mg(2+) as a cofactor.

The catalysed reaction is Couples ATP hydrolysis with the unwinding of duplex DNA by translocating in the 3'-5' direction.. The enzyme catalyses ATP + H2O = ADP + phosphate + H(+). Its function is as follows. The heterodimer acts as both an ATP-dependent DNA helicase and an ATP-dependent, dual-direction single-stranded exonuclease. Recognizes the chi site generating a DNA molecule suitable for the initiation of homologous recombination. The AddA nuclease domain is required for chi fragment generation; this subunit has the helicase and 3' -&gt; 5' nuclease activities. In Desulforamulus reducens (strain ATCC BAA-1160 / DSM 100696 / MI-1) (Desulfotomaculum reducens), this protein is ATP-dependent helicase/nuclease subunit A.